Here is a 250-residue protein sequence, read N- to C-terminus: MSLQIQMIGTGSAFAKKFYNNNALVKCNGFQLLIDCGVTAPRALHELGVPITGIDGILITHIHADHVGGIEEFAFRLKYKYGMTIKLFVPAALVNPLWDHSLRGGLENKAEGLEQLADYFDVVALEEAVVHEIHPGLTVELVRSQHIAGKASYSLLLNNLLFYSSDARFNYAQLVELSTSGRCKYILHDCQLAEPAAVHATLNELLTLPEAVQEMIMLMHYDDEMEQFIGKSGKMSFMQQHKTYSFTEAT.

The segment at 19 to 220 (YNNNALVKCN…AVQEMIMLMH (202 aa)) is beta-lactamase-like. Zn(2+) is bound by residues His61, His63, Asp65, His66, His146, Asp166, and His220.

This sequence belongs to the anti-Pycsar protein Apyc1 family. In terms of assembly, homodimer. Requires Zn(2+) as cofactor.

It catalyses the reaction 3',5'-cyclic CMP + H2O = CMP + H(+). It carries out the reaction 3',5'-cyclic UMP + H2O = UMP + H(+). In terms of biological role, counteracts the endogenous Pycsar antiviral defense system. Phosphodiesterase that enables metal-dependent hydrolysis of host cyclic nucleotide Pycsar defense signals such as cCMP and cUMP. This chain is Anti-Pycsar protein Apyc1, found in Paenibacillus xerothermodurans.